A 792-amino-acid chain; its full sequence is Homeobox protein HAZ1 (792 aa).

Residues 1–154 (MDKTTTSDLV…RPPKGGTPKD (154 aa)) are disordered. Residues 15 to 36 (NIGSNAGSAQEPLTTNGKTSGV) show a composition bias toward polar residues. A compositionally biased stretch (basic residues) spans 38–49 (NRYKQTVKRGRK). Residues 51–67 (SQISPSKTYPLRSSHSN) are compositionally biased toward polar residues. The segment covering 95–104 (VAKKRKRSKP) has biased composition (basic residues). The segment covering 116–127 (TSEKKNKAHNEL) has biased composition (basic and acidic residues). The segment at 244–301 (DIFCAACGSKDVTLKNDIILCDGICDRGFHQYCLNPPLLAEDIPQGDEGWLCPACDCK) adopts a PHD-type zinc-finger fold. 2 disordered regions span residues 338 to 495 (QIDA…NSNL) and 529 to 599 (YGKA…SDQQ). Acidic residues predominate over residues 345–354 (PSDDSADNDY). The span at 362–371 (HKVDEEKSSG) shows a compositional bias: basic and acidic residues. Composition is skewed to acidic residues over residues 373–389 (DGGEGLDSDDSSSEDSE) and 433–453 (DESNSDQSDESDFTSDSDDFC). Residues 610–669 (STAKNRHFGPAINQKLKAHFKEDPYPSRATKENLAQELGLTFNQVTKWFSSTRHYARVAA) constitute a DNA-binding region (homeobox). Disordered stretches follow at residues 677–697 (ENHTAENNNNTNTVDSIQLRG) and 711–792 (SEER…KTGR). Composition is skewed to polar residues over residues 716 to 737 (GQSNLNEGTPLRSDTSCGQSVA) and 746 to 760 (NQGNDSSSNVRTPNA). Residues 774–792 (DEARRKAVQRELRKMKTGR) show a composition bias toward basic and acidic residues.

The protein belongs to the PHD-associated homeobox family. In terms of tissue distribution, expressed in roots, leaves, stems, panicle and seeds.

The protein resides in the nucleus. Transcriptional repressor involved in the regulation of gibberrelin (GA) signaling. Binds to the 5'-GATC-3' motif of HD16/EL1 promoter. Functions as a positive regulator of GA signaling by suppressing the expression of HD16/EL1, a negative regulator of GA signaling. This is Homeobox protein HAZ1 from Oryza sativa subsp. japonica (Rice).